A 432-amino-acid chain; its full sequence is 3-phosphoshikimate 1-carboxyvinyltransferase (432 aa).

Residues lysine 22, serine 23, and arginine 27 each coordinate 3-phosphoshikimate. Position 22 (lysine 22) interacts with phosphoenolpyruvate. 2 residues coordinate phosphoenolpyruvate: glycine 96 and arginine 127. The 3-phosphoshikimate site is built by serine 173, serine 174, glutamine 175, serine 201, aspartate 316, asparagine 339, and lysine 343. A phosphoenolpyruvate-binding site is contributed by glutamine 175. Residue aspartate 316 is the Proton acceptor of the active site. Residues arginine 347, arginine 391, and lysine 416 each coordinate phosphoenolpyruvate.

This sequence belongs to the EPSP synthase family. As to quaternary structure, monomer.

The protein resides in the cytoplasm. It carries out the reaction 3-phosphoshikimate + phosphoenolpyruvate = 5-O-(1-carboxyvinyl)-3-phosphoshikimate + phosphate. It functions in the pathway metabolic intermediate biosynthesis; chorismate biosynthesis; chorismate from D-erythrose 4-phosphate and phosphoenolpyruvate: step 6/7. In terms of biological role, catalyzes the transfer of the enolpyruvyl moiety of phosphoenolpyruvate (PEP) to the 5-hydroxyl of shikimate-3-phosphate (S3P) to produce enolpyruvyl shikimate-3-phosphate and inorganic phosphate. This is 3-phosphoshikimate 1-carboxyvinyltransferase from Haemophilus influenzae (strain PittGG).